The following is a 211-amino-acid chain: Thiamine-phosphate synthase (211 aa).

4-amino-2-methyl-5-(diphosphooxymethyl)pyrimidine is bound by residues 44–48 and asparagine 75; that span reads QYRNK. Residues aspartate 76 and aspartate 95 each coordinate Mg(2+). 4-amino-2-methyl-5-(diphosphooxymethyl)pyrimidine is bound at residue serine 114. Residue 140–142 participates in 2-[(2R,5Z)-2-carboxy-4-methylthiazol-5(2H)-ylidene]ethyl phosphate binding; the sequence is TKS. Lysine 143 contacts 4-amino-2-methyl-5-(diphosphooxymethyl)pyrimidine. Glycine 171 is a binding site for 2-[(2R,5Z)-2-carboxy-4-methylthiazol-5(2H)-ylidene]ethyl phosphate.

Belongs to the thiamine-phosphate synthase family. Requires Mg(2+) as cofactor.

It catalyses the reaction 2-[(2R,5Z)-2-carboxy-4-methylthiazol-5(2H)-ylidene]ethyl phosphate + 4-amino-2-methyl-5-(diphosphooxymethyl)pyrimidine + 2 H(+) = thiamine phosphate + CO2 + diphosphate. The catalysed reaction is 2-(2-carboxy-4-methylthiazol-5-yl)ethyl phosphate + 4-amino-2-methyl-5-(diphosphooxymethyl)pyrimidine + 2 H(+) = thiamine phosphate + CO2 + diphosphate. The enzyme catalyses 4-methyl-5-(2-phosphooxyethyl)-thiazole + 4-amino-2-methyl-5-(diphosphooxymethyl)pyrimidine + H(+) = thiamine phosphate + diphosphate. The protein operates within cofactor biosynthesis; thiamine diphosphate biosynthesis; thiamine phosphate from 4-amino-2-methyl-5-diphosphomethylpyrimidine and 4-methyl-5-(2-phosphoethyl)-thiazole: step 1/1. Functionally, condenses 4-methyl-5-(beta-hydroxyethyl)thiazole monophosphate (THZ-P) and 2-methyl-4-amino-5-hydroxymethyl pyrimidine pyrophosphate (HMP-PP) to form thiamine monophosphate (TMP). The polypeptide is Thiamine-phosphate synthase (Koribacter versatilis (strain Ellin345)).